We begin with the raw amino-acid sequence, 370 residues long: tRNA (guanine(26)-N(2))-dimethyltransferase (370 aa).

The region spanning 4 to 368 (TWVTEGRTTI…APLEEIRDCI (365 aa)) is the Trm1 methyltransferase domain. S-adenosyl-L-methionine-binding residues include R41, R66, D82, D108, and A109. The Zn(2+) site is built by C237, C240, C256, and C259.

It belongs to the class I-like SAM-binding methyltransferase superfamily. Trm1 family.

It carries out the reaction guanosine(26) in tRNA + 2 S-adenosyl-L-methionine = N(2)-dimethylguanosine(26) in tRNA + 2 S-adenosyl-L-homocysteine + 2 H(+). Dimethylates a single guanine residue at position 26 of a number of tRNAs using S-adenosyl-L-methionine as donor of the methyl groups. This chain is tRNA (guanine(26)-N(2))-dimethyltransferase, found in Methanospirillum hungatei JF-1 (strain ATCC 27890 / DSM 864 / NBRC 100397 / JF-1).